Consider the following 100-residue polypeptide: MHLSPQEKDKLLIVTAALLAERRLNRGLRLNHPEAVAWLSFLVIEGARDGQSVAELMAEGSTWLRRDQVMDGVPELIPEVQIEAVFKDGTKLVTLHDPIR.

It belongs to the urease gamma subunit family. As to quaternary structure, heterotrimer of UreA (gamma), UreB (beta) and UreC (alpha) subunits. Three heterotrimers associate to form the active enzyme.

The protein resides in the cytoplasm. The catalysed reaction is urea + 2 H2O + H(+) = hydrogencarbonate + 2 NH4(+). Its pathway is nitrogen metabolism; urea degradation; CO(2) and NH(3) from urea (urease route): step 1/1. This Prochlorococcus marinus (strain MIT 9313) protein is Urease subunit gamma.